The chain runs to 5141 residues: SCO-spondin (5141 aa).

An N-terminal signal peptide occupies residues 1–17 (MLLPALLFGMLWAPANG). Positions 18–102 (HWCEQIETVH…ACCPGWGGIH (85 aa)) constitute an EMI domain. Residues asparagine 88, asparagine 130, asparagine 150, and asparagine 167 are each glycosylated (N-linked (GlcNAc...) asparagine). The VWFD 1 domain maps to 193 to 364 (ATCATWSGFH…RLPGYEPGCL (172 aa)). 3 disulfide bridges follow: cysteine 195–cysteine 325, cysteine 217–cysteine 363, and cysteine 239–cysteine 245. The TIL 1 domain occupies 472-527 (CPGGQLYSDCISSCPPSCSAVAQGEEGSCGKECVSGCECPTGLFWDGALCVPAAHC). A VWFD 2 domain is found at 565-738 (AECAVGGDGH…FQVSGDGRCP (174 aa)). 2 disulfides stabilise this stretch: cysteine 567/cysteine 700 and cysteine 591/cysteine 737. Asparagine 657 and asparagine 822 each carry an N-linked (GlcNAc...) asparagine glycan. Residues 830–883 (CPGGQVYQECAPACGHYCGEPEDCKELGSCVAGCNCPPGLLWDLEGQCVPPSMC) form the TIL 2 domain. N-linked (GlcNAc...) asparagine glycans are attached at residues asparagine 895, asparagine 949, and asparagine 991. Positions 1017–1187 (GWCQASGAPH…HSWRLNPLCP (171 aa)) constitute a VWFD 3 domain. Disulfide bonds link cysteine 1019–cysteine 1151, cysteine 1041–cysteine 1186, and cysteine 1062–cysteine 1069. One can recognise a TIL 3 domain in the interval 1280 to 1336 (CEGGQVYEPCGSTCPPTCHDHHPELRWHCQAITCVEGCFCPEGTLLHGGTCVELTDC). A glycan (N-linked (GlcNAc...) asparagine) is linked at asparagine 1357. 4 consecutive LDL-receptor class A domains span residues 1380–1417 (GCAE…EGCD), 1420–1456 (VCGE…QGCL), 1456–1492 (LCPQ…ESCL), and 1496–1534 (SCTS…VHCS). Intrachain disulfides connect cysteine 1381–cysteine 1394, cysteine 1388–cysteine 1407, cysteine 1401–cysteine 1416, cysteine 1421–cysteine 1433, cysteine 1428–cysteine 1446, cysteine 1440–cysteine 1455, cysteine 1457–cysteine 1469, cysteine 1464–cysteine 1482, cysteine 1476–cysteine 1491, cysteine 1497–cysteine 1509, cysteine 1504–cysteine 1522, and cysteine 1516–cysteine 1533. Residues 1533–1567 (CSSPSLPTPPAGIGQNPSTSSPDTSPSPVGSASPA) form a disordered region. The segment covering 1549 to 1567 (PSTSSPDTSPSPVGSASPA) has biased composition (low complexity). LDL-receptor class A domains are found at residues 1569 to 1605 (PCSL…LDCG) and 1607 to 1646 (PCKL…DVCE). Cystine bridges form between cysteine 1570–cysteine 1582, cysteine 1577–cysteine 1595, cysteine 1589–cysteine 1604, cysteine 1608–cysteine 1621, cysteine 1615–cysteine 1634, and cysteine 1628–cysteine 1645. N-linked (GlcNAc...) asparagine glycans are attached at residues asparagine 1655 and asparagine 1668. The LDL-receptor class A 7 domain maps to 1660-1700 (PCPEFSCPNGTCIDFLLVCDGSPDCELADETEPSLDEQGCG). 9 cysteine pairs are disulfide-bonded: cysteine 1661–cysteine 1671, cysteine 1666–cysteine 1684, cysteine 1678–cysteine 1699, cysteine 1711–cysteine 1747, cysteine 1715–cysteine 1752, cysteine 1726–cysteine 1737, cysteine 1767–cysteine 1964, cysteine 1771–cysteine 1969, and cysteine 1781–cysteine 1791. 2 consecutive TSP type-1 domains span residues 1699-1753 (CGTW…EACP) and 1755-1970 (DGEW…EPCE). Residue asparagine 1725 is glycosylated (N-linked (GlcNAc...) asparagine). The N-linked (GlcNAc...) asparagine glycan is linked to asparagine 1814. 2 consecutive EGF-like domains span residues 1829-1868 (CPLT…GRCV) and 1869-1895 (RPRQ…CQLC). A VWFC 1 domain is found at 1970 to 2030 (EGCEQWGLTY…GMGESCCHCA (61 aa)). Asparagine 2035 carries an N-linked (GlcNAc...) asparagine glycan. Disulfide bonds link cysteine 2070-cysteine 2226, cysteine 2236-cysteine 2248, cysteine 2243-cysteine 2261, and cysteine 2255-cysteine 2270. One can recognise an F5/8 type C domain in the interval 2070–2226 (CYSPLGLAGL…IFLWVELLGC (157 aa)). Residues 2087 to 2109 (PLEHSTRAAPVEAPTAGPGPRED) are disordered. N-linked (GlcNAc...) asparagine glycans are attached at residues asparagine 2130 and asparagine 2148. The LDL-receptor class A 8 domain maps to 2235-2271 (LCPGTRHRCANGDCALKGGPCDGAVDCEDGSDEEGCG). The segment at 2262–2335 (EDGSDEEGCG…SPSASEGLLP (74 aa)) is disordered. A compositionally biased stretch (polar residues) spans 2276–2294 (STASRVHSTARTPALSPTQ). Residues 2301-2314 (HPREGLADMEHQQP) show a composition bias toward basic and acidic residues. 2 LDL-receptor class A domains span residues 2391 to 2427 (RCGP…QHCA) and 2448 to 2484 (LCSP…DDCV). Intrachain disulfides connect cysteine 2392–cysteine 2404, cysteine 2399–cysteine 2417, cysteine 2411–cysteine 2426, cysteine 2449–cysteine 2461, cysteine 2456–cysteine 2474, cysteine 2468–cysteine 2483, cysteine 2486–cysteine 2522, cysteine 2497–cysteine 2501, cysteine 2532–cysteine 2537, cysteine 2552–cysteine 2589, cysteine 2556–cysteine 2594, and cysteine 2567–cysteine 2579. TSP type-1 domains are found at residues 2485–2538 (DCVL…QACP) and 2540–2595 (AGAW…QLCP). The region spanning 2618–2660 (PPCPPSCLDPEANRSCSGHCVEGCRCPPGLFLQDSHCLPLSEC) is the TIL 4 domain. 2 N-linked (GlcNAc...) asparagine glycosylation sites follow: asparagine 2630 and asparagine 2679. TSP type-1 domains are found at residues 2700 to 2754 (SCGW…TDCG), 2758 to 2813 (PGWT…SLCP), and 2815 to 2868 (PSAW…HPCT). 9 disulfides stabilise this stretch: cysteine 2701-cysteine 2739, cysteine 2712-cysteine 2716, cysteine 2749-cysteine 2753, cysteine 2769-cysteine 2807, cysteine 2773-cysteine 2812, cysteine 2789-cysteine 2797, cysteine 2827-cysteine 2862, cysteine 2831-cysteine 2867, and cysteine 2842-cysteine 2852. N-linked (GlcNAc...) asparagine glycosylation is found at asparagine 2921 and asparagine 2951. TSP type-1 domains are found at residues 2969–3024 (ACGW…RPCQ) and 3025–3068 (GPGA…QPCA). Cystine bridges form between cysteine 2970/cysteine 3008, cysteine 2981/cysteine 2985, and cysteine 3018/cysteine 3023. Asparagine 3046, asparagine 3101, asparagine 3148, and asparagine 3158 each carry an N-linked (GlcNAc...) asparagine glycan. One can recognise a TIL 5 domain in the interval 3075–3127 (CPKDQQWLDCAQGPASCAHLSTPREANQTCHPGCYCLSGMLLLNNVCVPAQDC). 2 consecutive TSP type-1 domains span residues 3168–3235 (QPAW…PGCN) and 3237–3292 (AGVW…QPCP). 6 disulfides stabilise this stretch: cysteine 3180–cysteine 3229, cysteine 3184–cysteine 3234, cysteine 3195–cysteine 3219, cysteine 3249–cysteine 3286, cysteine 3253–cysteine 3291, and cysteine 3264–cysteine 3276. The N-linked (GlcNAc...) asparagine glycan is linked to asparagine 3295. The TIL 6 domain maps to 3300–3350 (EGAEYSPCGPPCPRSCDDLVHCMWHCQPGCYCPPGKVLSADGAICVQPHHC). N-linked (GlcNAc...) asparagine glycosylation occurs at asparagine 3384. 2 TSP type-1 domains span residues 3393–3455 (SGDW…TACP) and 3457–3512 (DGAW…TPCT). 6 cysteine pairs are disulfide-bonded: cysteine 3405-cysteine 3448, cysteine 3409-cysteine 3454, cysteine 3420-cysteine 3432, cysteine 3469-cysteine 3504, cysteine 3472-cysteine 3511, and cysteine 3482-cysteine 3494. The N-linked (GlcNAc...) asparagine glycan is linked to asparagine 3506. The TIL 7 domain occupies 3514 to 3570 (CGGGQDLLPCGQPCPHSCQDLSLGSTCQPGSSGCQSGCGCPPGQLSQDGLCVFPADC). Residues asparagine 3584 and asparagine 3611 are each glycosylated (N-linked (GlcNAc...) asparagine). Residues 3630–3678 (PGIWSSWGPWEKCSVPCGGGEQLRSRQCARPPCPGLAQQSRTCHIHVCR) form the TSP type-1 14 domain. 3 disulfide bridges follow: cysteine 3642-cysteine 3672, cysteine 3646-cysteine 3677, and cysteine 3657-cysteine 3662. Residue asparagine 3787 is glycosylated (N-linked (GlcNAc...) asparagine). 4 TSP type-1 domains span residues 3806-3862 (RGYF…PECP), 3876-3928 (AGGW…PSCT), 3942-3998 (NCFW…RACP), and 4000-4055 (PGGW…MPCE). Cystine bridges form between cysteine 3818–cysteine 3856, cysteine 3822–cysteine 3861, and cysteine 3834–cysteine 3846. An N-linked (GlcNAc...) asparagine glycan is attached at asparagine 3910. 6 disulfides stabilise this stretch: cysteine 3943–cysteine 3979, cysteine 3954–cysteine 3958, cysteine 3992–cysteine 3997, cysteine 4012–cysteine 4049, cysteine 4016–cysteine 4054, and cysteine 4027–cysteine 4039. The region spanning 4058-4113 (CPAGMEMVSCANRCPYSCSDLQEAVMCQEDQACQLGCRCSEGFLEQDGGCVPVGHC) is the TIL 8 domain. Asparagine 4135 carries N-linked (GlcNAc...) asparagine glycosylation. TSP type-1 domains are found at residues 4155 to 4208 (HCAW…DPCP), 4249 to 4304 (PGGW…QLCL), 4306 to 4362 (LLEI…GPCQ), and 4364 to 4418 (DCMW…GNCS). 6 cysteine pairs are disulfide-bonded: cysteine 4156/cysteine 4192, cysteine 4167/cysteine 4171, cysteine 4202/cysteine 4207, cysteine 4261/cysteine 4298, cysteine 4265/cysteine 4303, and cysteine 4276/cysteine 4288. An N-linked (GlcNAc...) asparagine glycan is attached at asparagine 4345. 3 disulfide bridges follow: cysteine 4365–cysteine 4402, cysteine 4376–cysteine 4378, and cysteine 4412–cysteine 4417. Asparagine 4416 carries an N-linked (GlcNAc...) asparagine glycan. A TIL 9 domain is found at 4422-4477 (CLPPFEFQSCGSPCAGLCATHLSHQLCQDLPPCQPGCYCPMGLLEQDGGCILPEQC). Residue asparagine 4557 is glycosylated (N-linked (GlcNAc...) asparagine). In terms of domain architecture, TSP type-1 23 spans 4608–4659 (TCQWGPWGPWSPCQVPCSGGFKLRWREASDNSVGECRGPWAQTESCNMGSCP). 3 disulfide bridges follow: cysteine 4609–cysteine 4643, cysteine 4620–cysteine 4624, and cysteine 4653–cysteine 4658. The 47-residue stretch at 4673-4719 (DCANQCPRSCADLWEGVQCLQGPCSPGCRCPPGQLVQDGHCVPISSC) folds into the TIL 10 domain. N-linked (GlcNAc...) asparagine glycosylation is found at asparagine 4727, asparagine 4744, and asparagine 4749. One can recognise a TSP type-1 24 domain in the interval 4759–4812 (CPVLGPWSPWSECSAVCGGGTMVRYRSCEEHPDSAPCQALDMEQRVECNLQTCP). 3 disulfides stabilise this stretch: cysteine 4771/cysteine 4806, cysteine 4775/cysteine 4811, and cysteine 4786/cysteine 4795. The region spanning 4814-4868 (CPPGQVLSTCATLCPSFCSHLWPGTICVREPCQLGCGCPGGQLLHSGTCIPPEAC) is the TIL 11 domain. N-linked (GlcNAc...) asparagine glycosylation is found at asparagine 4899, asparagine 4942, and asparagine 4949. The 59-residue stretch at 4920–4978 (CPPGEILQLGELRPCEKTCLEMNKTQAWSNCTEAQVPGCVCQLGHFRSHTGLCVPEDHC) folds into the TIL 12 domain. A VWFC 2 domain is found at 4978–5036 (CECWHHGSPHLPGSEWQEACESCRCLHGKSVCTQHCPELSCAQGEVVVQEPGSCCPICQ). 4 disulfide bridges follow: cysteine 5047–cysteine 5095, cysteine 5061–cysteine 5112, cysteine 5071–cysteine 5128, and cysteine 5075–cysteine 5130. Positions 5047–5134 (CRHLTELRNL…IHNCHCSACQ (88 aa)) constitute a CTCK domain. N-linked (GlcNAc...) asparagine glycosylation is present at asparagine 5055.

This sequence belongs to the thrombospondin family.

Its subcellular location is the secreted. It is found in the extracellular space. In terms of biological role, involved in the modulation of neuronal aggregation. May be involved in developmental events during the formation of the central nervous system. The chain is SCO-spondin from Rattus norvegicus (Rat).